The chain runs to 281 residues: Transcription factor LBX1 (281 aa).

A compositionally biased stretch (basic and acidic residues) spans 1–20 (MTSKEDGKAAPGEERRRSPL). A disordered region spans residues 1–35 (MTSKEDGKAAPGEERRRSPLDHLPPPANSNKPLTP). The homeobox DNA-binding region spans 125 to 184 (RRKSRTAFTNHQIYELEKRFLYQKYLSPADRDQIAQQLGLTNAQVITWFQNRRAKLKRDL). The interval 214 to 281 (NSEATAGGGG…EEDEEIDVDD (68 aa)) is disordered. A compositionally biased stretch (polar residues) spans 253-267 (SPASPLTDQPASSQD). Acidic residues predominate over residues 268–281 (CSEDEEDEEIDVDD).

Interacts with SKOR1 which acts as a transcriptional corepressor.

The protein localises to the nucleus. Transcription factor required for the development of GABAergic interneurons in the dorsal horn of the spinal cord and migration and further development of hypaxial muscle precursor cells for limb muscles, diaphragm and hypoglossal cord. The sequence is that of Transcription factor LBX1 (LBX1) from Homo sapiens (Human).